The primary structure comprises 403 residues: Ribosomal RNA large subunit methyltransferase I (403 aa).

Residues 9 to 86 form the PUA domain; that stretch reads YPRLVLSKGR…KAESIDIAFF (78 aa).

It belongs to the methyltransferase superfamily. RlmI family.

It is found in the cytoplasm. It carries out the reaction cytidine(1962) in 23S rRNA + S-adenosyl-L-methionine = 5-methylcytidine(1962) in 23S rRNA + S-adenosyl-L-homocysteine + H(+). Functionally, specifically methylates the cytosine at position 1962 (m5C1962) of 23S rRNA. The protein is Ribosomal RNA large subunit methyltransferase I of Salmonella gallinarum (strain 287/91 / NCTC 13346).